The chain runs to 727 residues: MSRVVAADDNMALPFFSPEFGNVSGASSSPTTFAQLLQNVDDSTRRSHHQHHVDVDLASPDQSVPFVLSFTDLTYSVKVRRKFTWRRSVSSDPGAPSEGIFSSKTKTLLNGITGEARDGEILAVLGASGSGKSTLIDALANRIAKGSLKGNVTLNGEVLNSKMQKAISAYVMQDDLLFPMLTVEETLMFAAEFRLPRSLSKSKKSLRVQALIDQLGLRNAANTVIGDEGHRGISGGERRRVSIGIDIIHDPILLFLDEPTSGLDSTSALSVIKVLKRIAQSGSMVIMTLHQPSYRLLRLLDRLLFLSRGQTVFSGSPAMLPRFFAEFGHPIPEHENRTEFALDLIRELEGSAGGTRSLVEFNKGFRQRKAEPRSQTGLSLKEAISASISKGKLVSGATTTTHSSGSSPVSTIPTFANPFWVELAVLAKRSMTNSRRQPELFGIRLGAVLVTGFILATMFWQLDNSPKGVQERLGCFAFAMSTTFYTCADALPVFLQERFIFMRETAYNAYRRSSYVLSHSLVALPSLIILSLAFAAITFWGVGLDGGLMGFLFYFLVILASFWAGSSFVTFLSGVVPHVMLGYTIVVAILAYFLLFSGFFINRDRIPGYWIWFHYISLVKYPYEAVLLNEFGDPTKCFVRGVQIFDNTPLVAVPQGMKVRLLATMSKSLGMRITSSTCLTTGYDILQQQGVTDLTKWNCLWVTVAWGFFFRILFYFSLLLGSKNKRR.

In terms of domain architecture, ABC transporter spans 68–333 (LSFTDLTYSV…FAEFGHPIPE (266 aa)). 126–133 (GASGSGKS) serves as a coordination point for ATP. An ABC transmembrane type-2 domain is found at 421–631 (VELAVLAKRS…PYEAVLLNEF (211 aa)). 6 helical membrane-spanning segments follow: residues 440–460 (LFGI…TMFW), 475–495 (CFAF…PVFL), 517–537 (LSHS…FAAI), 560–580 (ASFW…PHVM), 581–601 (LGYT…GFFI), and 700–720 (LWVT…SLLL).

It belongs to the ABC transporter superfamily. ABCG family. Eye pigment precursor importer (TC 3.A.1.204) subfamily.

Its subcellular location is the membrane. The protein is ABC transporter G family member 6 (ABCG6) of Arabidopsis thaliana (Mouse-ear cress).